A 380-amino-acid polypeptide reads, in one-letter code: Cytochrome b (380 aa).

The next 4 membrane-spanning stretches (helical) occupy residues 34–54, 78–99, 114–134, and 179–199; these read FGSL…FLAM, WLIR…YLHI, WNIG…GYVL, and FFTF…IHLL. Residues His84 and His98 each coordinate heme b. Positions 183 and 197 each coordinate heme b. His202 contributes to the a ubiquinone binding site. Transmembrane regions (helical) follow at residues 227-247, 289-309, 321-341, and 348-368; these read YKDL…ALFT, LGGV…PILH, ITQI…WIGG, and FITI…ILFP.

It belongs to the cytochrome b family. In terms of assembly, the cytochrome bc1 complex contains 3 respiratory subunits (MT-CYB, CYC1 and UQCRFS1), 2 core proteins (UQCRC1 and UQCRC2) and probably 6 low-molecular weight proteins. Requires heme b as cofactor.

The protein localises to the mitochondrion inner membrane. In terms of biological role, component of the ubiquinol-cytochrome c reductase complex (complex III or cytochrome b-c1 complex) that is part of the mitochondrial respiratory chain. The b-c1 complex mediates electron transfer from ubiquinol to cytochrome c. Contributes to the generation of a proton gradient across the mitochondrial membrane that is then used for ATP synthesis. This Hemitrygon laosensis (Mekong freshwater stingray) protein is Cytochrome b (mt-cyb).